The following is a 79-amino-acid chain: Protein S100-G (79 aa).

Ser-2 is modified (N-acetylserine). EF-hand domains follow at residues 13 to 48 (IFQK…KASS) and 45 to 79 (KASS…KLSQ). Residues Gln-26 and Glu-31 each contribute to the Ca(2+) site. Phosphoserine occurs at positions 42 and 47. The Ca(2+) site is built by Asp-58, Asn-60, Asp-62, Glu-64, and Glu-69.

The protein belongs to the S-100 family.

The polypeptide is Protein S100-G (S100g) (Rattus norvegicus (Rat)).